The primary structure comprises 216 residues: Soluble inorganic pyrophosphatase 5 (216 aa).

The disordered stretch occupies residues 1 to 20 (MNGEEVKTSQPQKKLQNPTP). Polar residues predominate over residues 8 to 20 (TSQPQKKLQNPTP). Residues Lys66 and Arg80 each coordinate substrate. Tyr88 (proton donor) is an active-site residue. Position 92 (Tyr92) interacts with substrate. The Mg(2+) site is built by Asp102, Asp107, and Asp139. Tyr176 is a binding site for substrate.

Belongs to the PPase family. It depends on Mg(2+) as a cofactor.

Its subcellular location is the cytoplasm. The catalysed reaction is diphosphate + H2O = 2 phosphate + H(+). The polypeptide is Soluble inorganic pyrophosphatase 5 (Arabidopsis thaliana (Mouse-ear cress)).